The following is a 91-amino-acid chain: ATP synthase subunit c (91 aa).

The next 2 membrane-spanning stretches (helical) occupy residues 4 to 24 (FTMCVLAAGIGMALGTLGTGI) and 53 to 73 (IGLAMIESLAIYALVVCLIIL).

Belongs to the ATPase C chain family. As to quaternary structure, F-type ATPases have 2 components, F(1) - the catalytic core - and F(0) - the membrane proton channel. F(1) has five subunits: alpha(3), beta(3), gamma(1), delta(1), epsilon(1). F(0) has three main subunits: a(1), b(2) and c(10-14). The alpha and beta chains form an alternating ring which encloses part of the gamma chain. F(1) is attached to F(0) by a central stalk formed by the gamma and epsilon chains, while a peripheral stalk is formed by the delta and b chains.

The protein localises to the cell inner membrane. F(1)F(0) ATP synthase produces ATP from ADP in the presence of a proton or sodium gradient. F-type ATPases consist of two structural domains, F(1) containing the extramembraneous catalytic core and F(0) containing the membrane proton channel, linked together by a central stalk and a peripheral stalk. During catalysis, ATP synthesis in the catalytic domain of F(1) is coupled via a rotary mechanism of the central stalk subunits to proton translocation. Functionally, key component of the F(0) channel; it plays a direct role in translocation across the membrane. A homomeric c-ring of between 10-14 subunits forms the central stalk rotor element with the F(1) delta and epsilon subunits. The sequence is that of ATP synthase subunit c from Geotalea uraniireducens (strain Rf4) (Geobacter uraniireducens).